We begin with the raw amino-acid sequence, 186 residues long: Dynactin subunit 3 (186 aa).

Ala2 bears the N-acetylalanine mark. Positions 135 to 157 (QQQDQCVEITEESKALLEEYNKT) form a coiled coil.

It belongs to the dynactin subunit 3 family. Subunit of dynactin, a multiprotein complex part of a tripartite complex with dynein and a adapter, such as BICDL1, BICD2 or HOOK3. The dynactin complex is built around ACTR1A/ACTB filament and consists of an actin-related filament composed of a shoulder domain, a pointed end and a barbed end. Its length is defined by its flexible shoulder domain. The soulder is composed of 2 DCTN1 subunits, 4 DCTN2 and 2 DCTN3. The 4 DCNT2 (via N-terminus) bind the ACTR1A filament and act as molecular rulers to determine the length. The pointed end is important for binding dynein-dynactin cargo adapters. Consists of 4 subunits: ACTR10, DCNT4, DCTN5 and DCTN6. The barbed end is composed of a CAPZA1:CAPZB heterodimers, which binds ACTR1A/ACTB filament and dynactin and stabilizes dynactin.

It is found in the cytoplasm. It localises to the cytoskeleton. The protein localises to the microtubule organizing center. The protein resides in the centrosome. Its subcellular location is the chromosome. It is found in the centromere. It localises to the kinetochore. The protein localises to the spindle. The protein resides in the cleavage furrow. Its subcellular location is the midbody. Functionally, part of the dynactin complex that activates the molecular motor dynein for ultra-processive transport along microtubules. Together with dynein may be involved in spindle assembly and cytokinesis. This Bos taurus (Bovine) protein is Dynactin subunit 3 (DCTN3).